Reading from the N-terminus, the 225-residue chain is Glycerol-3-phosphate acyltransferase (225 aa).

The next 6 helical transmembrane spans lie at 1–21, 56–76, 95–115, 134–154, 159–178, and 182–201; these read MAIW…LGSF, GPGL…VALV, IGLW…LGHS, VLLV…ALVV, IVSL…MFVA, and LAYV…RHWA.

This sequence belongs to the PlsY family. As to quaternary structure, probably interacts with PlsX.

The protein resides in the cell inner membrane. The catalysed reaction is an acyl phosphate + sn-glycerol 3-phosphate = a 1-acyl-sn-glycero-3-phosphate + phosphate. The protein operates within lipid metabolism; phospholipid metabolism. Functionally, catalyzes the transfer of an acyl group from acyl-phosphate (acyl-PO(4)) to glycerol-3-phosphate (G3P) to form lysophosphatidic acid (LPA). This enzyme utilizes acyl-phosphate as fatty acyl donor, but not acyl-CoA or acyl-ACP. The sequence is that of Glycerol-3-phosphate acyltransferase from Acaryochloris marina (strain MBIC 11017).